A 447-amino-acid chain; its full sequence is N-succinylarginine dihydrolase (447 aa).

Substrate contacts are provided by residues 19–28 (AGLSFGNEAS), Asn-110, and 137–138 (HR). Glu-174 is a catalytic residue. Arg-212 contributes to the substrate binding site. His-248 is an active-site residue. Asp-250 and Asn-359 together coordinate substrate. Cys-365 acts as the Nucleophile in catalysis.

Belongs to the succinylarginine dihydrolase family. In terms of assembly, homodimer.

The enzyme catalyses N(2)-succinyl-L-arginine + 2 H2O + 2 H(+) = N(2)-succinyl-L-ornithine + 2 NH4(+) + CO2. The protein operates within amino-acid degradation; L-arginine degradation via AST pathway; L-glutamate and succinate from L-arginine: step 2/5. In terms of biological role, catalyzes the hydrolysis of N(2)-succinylarginine into N(2)-succinylornithine, ammonia and CO(2). The protein is N-succinylarginine dihydrolase of Escherichia coli O139:H28 (strain E24377A / ETEC).